The chain runs to 131 residues: Protein ApaG (131 aa).

One can recognise an ApaG domain in the interval 3-127; that stretch reads RAVTRQIEVT…FSLDSPDGGK (125 aa).

This chain is Protein ApaG, found in Bradyrhizobium sp. (strain BTAi1 / ATCC BAA-1182).